The chain runs to 313 residues: Porphobilinogen deaminase (313 aa).

Cysteine 242 carries the S-(dipyrrolylmethanemethyl)cysteine modification.

It belongs to the HMBS family. Monomer. Dipyrromethane serves as cofactor.

It carries out the reaction 4 porphobilinogen + H2O = hydroxymethylbilane + 4 NH4(+). It participates in porphyrin-containing compound metabolism; protoporphyrin-IX biosynthesis; coproporphyrinogen-III from 5-aminolevulinate: step 2/4. In terms of biological role, tetrapolymerization of the monopyrrole PBG into the hydroxymethylbilane pre-uroporphyrinogen in several discrete steps. This Pseudomonas fluorescens (strain ATCC BAA-477 / NRRL B-23932 / Pf-5) protein is Porphobilinogen deaminase.